Reading from the N-terminus, the 191-residue chain is SCO2-like protein RP031 (191 aa).

Belongs to the SCO1/2 family.

The polypeptide is SCO2-like protein RP031 (Rickettsia prowazekii (strain Madrid E)).